The chain runs to 212 residues: Large ribosomal subunit protein uL3 (212 aa).

Residues 133–156 are disordered; the sequence is SMTHGSKNHRLPGSTGAGTTPGRV.

It belongs to the universal ribosomal protein uL3 family. In terms of assembly, part of the 50S ribosomal subunit. Forms a cluster with proteins L14 and L19.

Functionally, one of the primary rRNA binding proteins, it binds directly near the 3'-end of the 23S rRNA, where it nucleates assembly of the 50S subunit. The chain is Large ribosomal subunit protein uL3 from Crocosphaera subtropica (strain ATCC 51142 / BH68) (Cyanothece sp. (strain ATCC 51142)).